The following is a 462-amino-acid chain: Argininosuccinate lyase (462 aa).

It belongs to the lyase 1 family. Argininosuccinate lyase subfamily.

The protein resides in the cytoplasm. The catalysed reaction is 2-(N(omega)-L-arginino)succinate = fumarate + L-arginine. Its pathway is amino-acid biosynthesis; L-arginine biosynthesis; L-arginine from L-ornithine and carbamoyl phosphate: step 3/3. This Methylobacterium sp. (strain 4-46) protein is Argininosuccinate lyase.